A 372-amino-acid chain; its full sequence is Alanine racemase (372 aa).

Lys35 (proton acceptor; specific for D-alanine) is an active-site residue. An N6-(pyridoxal phosphate)lysine modification is found at Lys35. Arg143 provides a ligand contact to substrate. Tyr268 serves as the catalytic Proton acceptor; specific for L-alanine. Substrate is bound at residue Met316.

It belongs to the alanine racemase family. Pyridoxal 5'-phosphate serves as cofactor.

It carries out the reaction L-alanine = D-alanine. The protein operates within amino-acid biosynthesis; D-alanine biosynthesis; D-alanine from L-alanine: step 1/1. Functionally, catalyzes the interconversion of L-alanine and D-alanine. May also act on other amino acids. The protein is Alanine racemase (alr) of Shewanella frigidimarina (strain NCIMB 400).